The primary structure comprises 384 residues: PqqA peptide cyclase (384 aa).

In terms of domain architecture, Radical SAM core spans 14–230 (IPAPVGLLAE…EAARERLKGQ (217 aa)). [4Fe-4S] cluster-binding residues include cysteine 28, cysteine 32, and cysteine 35.

This sequence belongs to the radical SAM superfamily. PqqE family. As to quaternary structure, interacts with PqqD. The interaction is necessary for activity of PqqE. The cofactor is [4Fe-4S] cluster.

The catalysed reaction is [PQQ precursor protein] + S-adenosyl-L-methionine = E-Y cross-linked-[PQQ precursor protein] + 5'-deoxyadenosine + L-methionine + H(+). It participates in cofactor biosynthesis; pyrroloquinoline quinone biosynthesis. In terms of biological role, catalyzes the cross-linking of a glutamate residue and a tyrosine residue in the PqqA protein as part of the biosynthesis of pyrroloquinoline quinone (PQQ). The sequence is that of PqqA peptide cyclase from Methylorubrum extorquens (strain CM4 / NCIMB 13688) (Methylobacterium extorquens).